The chain runs to 132 residues: Small ribosomal subunit protein uS8 (132 aa).

It belongs to the universal ribosomal protein uS8 family. Part of the 30S ribosomal subunit. Contacts proteins S5 and S12.

Its function is as follows. One of the primary rRNA binding proteins, it binds directly to 16S rRNA central domain where it helps coordinate assembly of the platform of the 30S subunit. The protein is Small ribosomal subunit protein uS8 of Stenotrophomonas maltophilia (strain K279a).